The chain runs to 522 residues: Protein tweety homolog 3 (522 aa).

The Extracellular segment spans residues 1–43 (MAAAISYTPPWWVNLLHRLPHLNLQWESLNGDFRPEDPDYQQS). A helical membrane pass occupies residues 44 to 64 (LMLLACVALSCLALDLLFLLF). Residues 65–87 (YSFWFCCRHRKTEENTNADCCCT) lie on the Cytoplasmic side of the membrane. A helical membrane pass occupies residues 88-108 (VWCVIVATLVCSAGIAVGFYG). Topologically, residues 109–211 (NGETSDGIHR…VDLFDWYRWL (103 aa)) are extracellular. Ca(2+)-binding residues include Glu-111 and Asp-114. N-linked (GlcNAc...) asparagine glycosylation is found at Asn-127 and Asn-145. The chain crosses the membrane as a helical span at residues 212–232 (GYLGLLLFHVFICLLVLFGLI). Over 233–238 (RNSKGT) the chain is Cytoplasmic. A helical membrane pass occupies residues 239–259 (LICVCFLGMMALIISWASMGL). The Extracellular segment spans residues 260-386 (ELAVAVGSSD…LTGFCYDGVE (127 aa)). Disulfide bonds link Cys-271–Cys-381 and Cys-299–Cys-366. Asn-351 is a glycosylation site (N-linked (GlcNAc...) asparagine). Residues 387-407 (GLIYLVLFSFVTALMFSSIVC) form a helical membrane-spanning segment. At 408 to 522 (SVPHTWQQRR…TNRPETDPVH (115 aa)) the chain is on the cytoplasmic side. Positions 483 to 522 (QNPRCENTPLIGRESPPPSYTSSMRAKYLATNRPETDPVH) are disordered.

It belongs to the tweety family. Homotetramer; disulfide-linked. Forms cis-homodimers in the presence of Ca(2+).

The protein localises to the cell membrane. The enzyme catalyses chloride(in) = chloride(out). It carries out the reaction L-glutamate(out) = L-glutamate(in). Functionally, may act as a calcium-independent, swelling-dependent volume-regulated anion channel (VRAC-swell) which plays a pivotal role in the process of regulatory volume decrease (RVD) in the brain through the efflux of anions like chloride and organic osmolytes like glutamate. Probable large-conductance Ca(2+)-activated chloride channel. The sequence is that of Protein tweety homolog 3 (ttyh3) from Xenopus laevis (African clawed frog).